The primary structure comprises 214 residues: Imidazole glycerol phosphate synthase subunit HisH (214 aa).

Residues 2–214 (RVALIDYGSG…LIANFLRWAP (213 aa)) enclose the Glutamine amidotransferase type-1 domain. Catalysis depends on Cys88, which acts as the Nucleophile. Active-site residues include His194 and Glu196.

Heterodimer of HisH and HisF.

The protein localises to the cytoplasm. The catalysed reaction is 5-[(5-phospho-1-deoxy-D-ribulos-1-ylimino)methylamino]-1-(5-phospho-beta-D-ribosyl)imidazole-4-carboxamide + L-glutamine = D-erythro-1-(imidazol-4-yl)glycerol 3-phosphate + 5-amino-1-(5-phospho-beta-D-ribosyl)imidazole-4-carboxamide + L-glutamate + H(+). It catalyses the reaction L-glutamine + H2O = L-glutamate + NH4(+). It functions in the pathway amino-acid biosynthesis; L-histidine biosynthesis; L-histidine from 5-phospho-alpha-D-ribose 1-diphosphate: step 5/9. IGPS catalyzes the conversion of PRFAR and glutamine to IGP, AICAR and glutamate. The HisH subunit catalyzes the hydrolysis of glutamine to glutamate and ammonia as part of the synthesis of IGP and AICAR. The resulting ammonia molecule is channeled to the active site of HisF. In Rhodospirillum rubrum (strain ATCC 11170 / ATH 1.1.1 / DSM 467 / LMG 4362 / NCIMB 8255 / S1), this protein is Imidazole glycerol phosphate synthase subunit HisH.